A 307-amino-acid chain; its full sequence is Ribosomal RNA small subunit methyltransferase H (307 aa).

Residues 32–34, D52, F78, D100, and Q107 contribute to the S-adenosyl-L-methionine site; that span reads GGH.

Belongs to the methyltransferase superfamily. RsmH family.

Its subcellular location is the cytoplasm. It catalyses the reaction cytidine(1402) in 16S rRNA + S-adenosyl-L-methionine = N(4)-methylcytidine(1402) in 16S rRNA + S-adenosyl-L-homocysteine + H(+). Specifically methylates the N4 position of cytidine in position 1402 (C1402) of 16S rRNA. The protein is Ribosomal RNA small subunit methyltransferase H of Coxiella burnetii (strain CbuK_Q154) (Coxiella burnetii (strain Q154)).